The chain runs to 491 residues: Putative ABC transporter ATP-binding protein TDE_0906 (491 aa).

2 consecutive ABC transporter domains span residues 2–241 (INLN…KQGL) and 267–491 (LTLH…KERL). ATP-binding positions include 36-43 (GKSGCGKT) and 300-307 (GKNGCGKT).

It belongs to the ABC transporter superfamily.

It is found in the cell inner membrane. Functionally, probably part of an ABC transporter complex. Responsible for energy coupling to the transport system. In Treponema denticola (strain ATCC 35405 / DSM 14222 / CIP 103919 / JCM 8153 / KCTC 15104), this protein is Putative ABC transporter ATP-binding protein TDE_0906.